A 221-amino-acid chain; its full sequence is Thiopurine S-methyltransferase (221 aa).

The S-adenosyl-L-methionine site is built by W12, L47, E68, and R125.

Belongs to the class I-like SAM-binding methyltransferase superfamily. TPMT family.

It is found in the cytoplasm. It carries out the reaction S-adenosyl-L-methionine + a thiopurine = S-adenosyl-L-homocysteine + a thiopurine S-methylether.. This Legionella pneumophila subsp. pneumophila (strain Philadelphia 1 / ATCC 33152 / DSM 7513) protein is Thiopurine S-methyltransferase.